Consider the following 197-residue polypeptide: ATP-dependent Clp protease proteolytic subunit 1 (197 aa).

Residue Ser-99 is the Nucleophile of the active site. His-124 is a catalytic residue.

The protein belongs to the peptidase S14 family. As to quaternary structure, fourteen ClpP subunits assemble into 2 heptameric rings which stack back to back to give a disk-like structure with a central cavity, resembling the structure of eukaryotic proteasomes.

The protein localises to the cytoplasm. The enzyme catalyses Hydrolysis of proteins to small peptides in the presence of ATP and magnesium. alpha-casein is the usual test substrate. In the absence of ATP, only oligopeptides shorter than five residues are hydrolyzed (such as succinyl-Leu-Tyr-|-NHMec, and Leu-Tyr-Leu-|-Tyr-Trp, in which cleavage of the -Tyr-|-Leu- and -Tyr-|-Trp bonds also occurs).. Its function is as follows. Cleaves peptides in various proteins in a process that requires ATP hydrolysis. Has a chymotrypsin-like activity. Plays a major role in the degradation of misfolded proteins. This chain is ATP-dependent Clp protease proteolytic subunit 1, found in Treponema denticola (strain ATCC 35405 / DSM 14222 / CIP 103919 / JCM 8153 / KCTC 15104).